A 332-amino-acid chain; its full sequence is 4-hydroxyproline 2-epimerase 2 (332 aa).

Cys-89 serves as the catalytic Proton acceptor. Substrate contacts are provided by residues His-222, Asp-248, and 253-254 (GT).

It belongs to the proline racemase family.

It catalyses the reaction trans-4-hydroxy-L-proline = cis-4-hydroxy-D-proline. In terms of biological role, catalyzes the epimerization of trans-4-hydroxy-L-proline (t4LHyp) to cis-4-hydroxy-D-proline (c4DHyp). Is likely involved in a degradation pathway that converts t4LHyp to alpha-ketoglutarate. Displays no proline racemase activity. In Rhizobium rhizogenes (strain K84 / ATCC BAA-868) (Agrobacterium radiobacter), this protein is 4-hydroxyproline 2-epimerase 2.